A 265-amino-acid polypeptide reads, in one-letter code: Deoxycytidine kinase 2 (265 aa).

Residue 31-39 participates in ATP binding; the sequence is GNIAAGKST. The substrate site is built by Glu-56, Tyr-89, and Gln-100. The active-site Proton acceptor is the Glu-130. Residues Arg-131 and Asp-136 each contribute to the substrate site. Position 191–195 (191–195) interacts with ATP; sequence RLQKR. Glu-200 lines the substrate pocket. ATP is bound at residue 243-245; the sequence is EDF.

It belongs to the DCK/DGK family. Homodimer. As to expression, expressed at high levels in adult intestine, spleen, thymus and testis with lower levels in skeletal muscle and eye. In the embryo, expressed at higher levels until day 10 with lower levels in later stages.

The protein localises to the nucleus. The catalysed reaction is 2'-deoxycytidine + a ribonucleoside 5'-triphosphate = dCMP + a ribonucleoside 5'-diphosphate + H(+). It carries out the reaction 2'-deoxyguanosine + ATP = dGMP + ADP + H(+). It catalyses the reaction 2'-deoxyadenosine + ATP = dAMP + ADP + H(+). Phosphorylates the deoxyribonucleosides deoxyadenosine, deoxycytidine and deoxyguanosine. Shows highest activity against deoxyguanosine followed by deoxycytidine and then deoxyadenosine. Shows only very minor activity against deoxyuridine and deoxythymidine. In Gallus gallus (Chicken), this protein is Deoxycytidine kinase 2.